Here is a 348-residue protein sequence, read N- to C-terminus: L-threonine 3-dehydrogenase (348 aa).

C42 is a Zn(2+) binding site. Catalysis depends on charge relay system residues T44 and H47. Positions 67, 68, 97, 100, 103, and 111 each coordinate Zn(2+). NAD(+) is bound by residues L179, E199, R204, 266-268 (LGL), and 291-292 (IT).

It belongs to the zinc-containing alcohol dehydrogenase family. As to quaternary structure, homotetramer. Zn(2+) is required as a cofactor.

It is found in the cytoplasm. It catalyses the reaction L-threonine + NAD(+) = (2S)-2-amino-3-oxobutanoate + NADH + H(+). The protein operates within amino-acid degradation; L-threonine degradation via oxydo-reductase pathway; glycine from L-threonine: step 1/2. Functionally, catalyzes the NAD(+)-dependent oxidation of L-threonine to 2-amino-3-ketobutyrate. To a lesser extent, also catalyzes the oxidation of L-serine, D-threonine, butan-2,3-diol, butan-1,2-diol, and propan-1,2-diol and cannot oxidize other L-amino acids. Cannot utilize NADP(H) instead of NAD(H). This is L-threonine 3-dehydrogenase from Pyrococcus furiosus (strain ATCC 43587 / DSM 3638 / JCM 8422 / Vc1).